A 237-amino-acid chain; its full sequence is tRNA (guanine-N(7)-)-methyltransferase (237 aa).

The tract at residues 1-24 (MTAHKPGDPTTLNRLYGRSKGKPL) is disordered. Residues Glu-62, Glu-87, Asp-119, and Asp-141 each coordinate S-adenosyl-L-methionine. Residue Asp-141 is part of the active site. Substrate-binding positions include Lys-145, Asp-177, and 216–219 (TRYE).

It belongs to the class I-like SAM-binding methyltransferase superfamily. TrmB family.

It catalyses the reaction guanosine(46) in tRNA + S-adenosyl-L-methionine = N(7)-methylguanosine(46) in tRNA + S-adenosyl-L-homocysteine. Its pathway is tRNA modification; N(7)-methylguanine-tRNA biosynthesis. Functionally, catalyzes the formation of N(7)-methylguanine at position 46 (m7G46) in tRNA. This Sphingopyxis alaskensis (strain DSM 13593 / LMG 18877 / RB2256) (Sphingomonas alaskensis) protein is tRNA (guanine-N(7)-)-methyltransferase.